Consider the following 310-residue polypeptide: Carbamate kinase-like protein YqeA (310 aa).

This sequence belongs to the carbamate kinase family.

The polypeptide is Carbamate kinase-like protein YqeA (yqeA) (Escherichia coli (strain K12)).